The primary structure comprises 312 residues: Acetyl-coenzyme A carboxylase carboxyl transferase subunit alpha (312 aa).

One can recognise a CoA carboxyltransferase C-terminal domain in the interval 36–286 (RLDKEVKSIY…KEYFLDALRT (251 aa)).

This sequence belongs to the AccA family. In terms of assembly, acetyl-CoA carboxylase is a heterohexamer composed of biotin carboxyl carrier protein (AccB), biotin carboxylase (AccC) and two subunits each of ACCase subunit alpha (AccA) and ACCase subunit beta (AccD).

It localises to the cytoplasm. It carries out the reaction N(6)-carboxybiotinyl-L-lysyl-[protein] + acetyl-CoA = N(6)-biotinyl-L-lysyl-[protein] + malonyl-CoA. It participates in lipid metabolism; malonyl-CoA biosynthesis; malonyl-CoA from acetyl-CoA: step 1/1. In terms of biological role, component of the acetyl coenzyme A carboxylase (ACC) complex. First, biotin carboxylase catalyzes the carboxylation of biotin on its carrier protein (BCCP) and then the CO(2) group is transferred by the carboxyltransferase to acetyl-CoA to form malonyl-CoA. The polypeptide is Acetyl-coenzyme A carboxylase carboxyl transferase subunit alpha (Helicobacter pylori (strain G27)).